The primary structure comprises 266 residues: Phosphatidylglycerol--prolipoprotein diacylglyceryl transferase (266 aa).

Transmembrane regions (helical) follow at residues Leu-17 to Ala-37, Leu-56 to Tyr-76, Trp-92 to Phe-112, Phe-120 to Ile-140, Pro-171 to Phe-191, Ala-199 to Val-219, and Trp-233 to Val-253. Residue Arg-139 coordinates a 1,2-diacyl-sn-glycero-3-phospho-(1'-sn-glycerol).

Belongs to the Lgt family.

The protein localises to the cell inner membrane. It carries out the reaction L-cysteinyl-[prolipoprotein] + a 1,2-diacyl-sn-glycero-3-phospho-(1'-sn-glycerol) = an S-1,2-diacyl-sn-glyceryl-L-cysteinyl-[prolipoprotein] + sn-glycerol 1-phosphate + H(+). The protein operates within protein modification; lipoprotein biosynthesis (diacylglyceryl transfer). Catalyzes the transfer of the diacylglyceryl group from phosphatidylglycerol to the sulfhydryl group of the N-terminal cysteine of a prolipoprotein, the first step in the formation of mature lipoproteins. This Pseudomonas aeruginosa (strain UCBPP-PA14) protein is Phosphatidylglycerol--prolipoprotein diacylglyceryl transferase.